We begin with the raw amino-acid sequence, 130 residues long: Small ribosomal subunit protein uS11c (130 aa).

This sequence belongs to the universal ribosomal protein uS11 family. Part of the 30S ribosomal subunit.

The protein resides in the plastid. It localises to the chloroplast. The chain is Small ribosomal subunit protein uS11c from Marsilea quadrifolia (European water clover).